A 250-amino-acid chain; its full sequence is NADH-quinone oxidoreductase subunit C (250 aa).

Disordered stretches follow at residues 1 to 33 and 228 to 250; these read MSDDSSDVKPGPKGPEQPAVEQSPENVPAPTGE and LGGVPVEYKGGTVPPPDQRRSYN.

Belongs to the complex I 30 kDa subunit family. In terms of assembly, NDH-1 is composed of 14 different subunits. Subunits NuoB, C, D, E, F, and G constitute the peripheral sector of the complex.

It is found in the cell membrane. The catalysed reaction is a quinone + NADH + 5 H(+)(in) = a quinol + NAD(+) + 4 H(+)(out). Its function is as follows. NDH-1 shuttles electrons from NADH, via FMN and iron-sulfur (Fe-S) centers, to quinones in the respiratory chain. The immediate electron acceptor for the enzyme in this species is believed to be a menaquinone. Couples the redox reaction to proton translocation (for every two electrons transferred, four hydrogen ions are translocated across the cytoplasmic membrane), and thus conserves the redox energy in a proton gradient. The chain is NADH-quinone oxidoreductase subunit C from Nocardioides sp. (strain ATCC BAA-499 / JS614).